A 116-amino-acid polypeptide reads, in one-letter code: Transcriptional regulator WhiB4 (116 aa).

One can recognise a 4Fe-4S Wbl-type domain in the interval 36–92 (LCRATDPDELFVRGAAQRKAAVICRHCPVMQECGADALDNKVEFGVWGGMTERQRRA). Residues cysteine 37, cysteine 59, cysteine 62, and cysteine 68 each coordinate [4Fe-4S] cluster.

This sequence belongs to the WhiB family. [4Fe-4S] cluster is required as a cofactor. Post-translationally, the Fe-S cluster can be nitrosylated by nitric oxide (NO). Upon Fe-S cluster removal intramolecular disulfide bonds are formed.

It is found in the cytoplasm. Functionally, acts as a transcriptional regulator. Probably redox-responsive. The apo- but not holo-form probably binds DNA. Plays a role in lipooligosaccharide (LOS) biosynthesis by regulating LOS gene expression. The chain is Transcriptional regulator WhiB4 (whiB4) from Mycobacterium marinum (strain ATCC BAA-535 / M).